The sequence spans 23 residues: Phallacidin proprotein 1 (23 aa).

Pro-1 is a propeptide. Positions 2–8 (AWLVDCP) form a cross-link, cyclopeptide (Ala-Pro). The 2'-cysteinyl-6'-hydroxytryptophan sulfoxide (Trp-Cys) cross-link spans 3-7 (WLVDC). The propeptide occupies 9 to 23 (CVGDDVNRLLTRGER).

Belongs to the MSDIN fungal toxin family. Post-translationally, processed by the macrocyclase-peptidase enzyme POPB to yield a toxic cyclic heptapeptide. POPB first removes 10 residues from the N-terminus. Conformational trapping of the remaining peptide forces the enzyme to release this intermediate rather than proceed to macrocyclization. The enzyme rebinds the remaining peptide in a different conformation and catalyzes macrocyclization of the N-terminal 7 residues.

In terms of biological role, toxin that belongs to the bicyclic heptapeptides called phallotoxins. Although structurally related to amatoxins, phallotoxins have a different mode of action, which is the stabilization of F-actin. Phallotoxins are poisonous when administered parenterally, but not orally because of poor absorption. The chain is Phallacidin proprotein 1 from Amanita exitialis (Guangzhou destroying angel).